Reading from the N-terminus, the 913-residue chain is Ubiquitin carboxyl-terminal hydrolase 26 (913 aa).

The USP domain maps to 295–886 (HGLPNLGNTC…TGYIFFYMHN (592 aa)). Cys304 functions as the Nucleophile in the catalytic mechanism. The segment covering 601–612 (HIGSDKESEQKK) has biased composition (basic and acidic residues). Disordered regions lie at residues 601-636 (HIGS…SKPN) and 753-772 (QQAL…TKNL). Catalysis depends on His841, which acts as the Proton acceptor.

The protein belongs to the peptidase C19 family. As to quaternary structure, interacts with RING1. In terms of tissue distribution, expressed in testis.

Its subcellular location is the nucleus. It is found in the cytoplasm. The protein localises to the cytoskeleton. It localises to the flagellum axoneme. The enzyme catalyses Thiol-dependent hydrolysis of ester, thioester, amide, peptide and isopeptide bonds formed by the C-terminal Gly of ubiquitin (a 76-residue protein attached to proteins as an intracellular targeting signal).. In terms of biological role, deubiquitinase regulating several biological processes through the deubiquitination of components of these processes. Involved in somatic cell reprogramming through the 'Lys-48'-linked deubiquitination and stabilization of CBX4 and CBX6, two components of the polycomb-repressive complex 1 (PRC1). Also deubiquitinates and probably stabilizes the androgen receptor (AR), regulating the androgen receptor signaling pathway. May play a role in spermatogenesis. In Homo sapiens (Human), this protein is Ubiquitin carboxyl-terminal hydrolase 26.